The chain runs to 164 residues: Ribosome maturation factor RimM (164 aa).

The PRC barrel domain occupies 93–164 (DSEYYVANLN…FVVIVPPEFI (72 aa)).

The protein belongs to the RimM family. In terms of assembly, binds ribosomal protein uS19.

Its subcellular location is the cytoplasm. Its function is as follows. An accessory protein needed during the final step in the assembly of 30S ribosomal subunit, possibly for assembly of the head region. Essential for efficient processing of 16S rRNA. May be needed both before and after RbfA during the maturation of 16S rRNA. It has affinity for free ribosomal 30S subunits but not for 70S ribosomes. The sequence is that of Ribosome maturation factor RimM from Orientia tsutsugamushi (strain Boryong) (Rickettsia tsutsugamushi).